Reading from the N-terminus, the 119-residue chain is Class I hydrophobin 2 (119 aa).

Residues 1–22 (MFARISTIITTLFFAMLAAATA) form the signal peptide. 4 cysteine pairs are disulfide-bonded: cysteine 36-cysteine 97, cysteine 45-cysteine 91, cysteine 46-cysteine 79, and cysteine 98-cysteine 112.

Belongs to the fungal hydrophobin family. In terms of assembly, self-assembles to form functional amyloid fibrils called rodlets. Self-assembly into fibrillar rodlets occurs spontaneously at hydrophobic:hydrophilic interfaces and the rodlets further associate laterally to form amphipathic monolayers.

The protein resides in the secreted. It localises to the cell wall. Its function is as follows. Aerial growth, conidiation, and dispersal of filamentous fungi in the environment rely upon a capability of their secreting small amphipathic proteins called hydrophobins (HPBs) with low sequence identity. Class I can self-assemble into an outermost layer of rodlet bundles on aerial cell surfaces, conferring cellular hydrophobicity that supports fungal growth, development and dispersal; whereas Class II form highly ordered films at water-air interfaces through intermolecular interactions but contribute nothing to the rodlet structure. Abh2 is a class I hydrophobin involved in the emergence of aerial hyphae and strands. The polypeptide is Class I hydrophobin 2 (Agaricus bisporus (White button mushroom)).